The chain runs to 167 residues: Myelin basic protein (167 aa).

Position 1 is an N-acetylalanine (alanine 1). Residues serine 7 and serine 12 each carry the phosphoserine modification. Phosphotyrosine is present on tyrosine 14. Residue threonine 17 is modified to Phosphothreonine. Phosphoserine is present on serine 19. Position 20 is a phosphothreonine (threonine 20). A citrulline mark is found at arginine 25 and arginine 31. Threonine 35 carries the phosphothreonine modification. Residue serine 40 is modified to Phosphoserine. An omega-N-methylarginine mark is found at arginine 43 and arginine 49. The tract at residues 45–87 (FGSDRAAPKRGSGKDSHHAARTTHYGSLPQKSQRSQDENPVVH) is induces experimental autoimmune encephalomyelitis (EAE) 1. Residues 46–114 (GSDRAAPKRG…GRGLSLSRFS (69 aa)) form a disordered region. The residue at position 56 (serine 56) is a Phosphoserine. Phosphothreonine is present on threonine 67. Position 69 is a phosphotyrosine (tyrosine 69). Position 76 is a phosphoserine (serine 76). Residues threonine 94 and threonine 97 each carry the phosphothreonine modification. At glutamine 102 the chain carries Deamidated glutamine. Residue arginine 106 is modified to Omega-N-methylarginine; alternate. Arginine 106 bears the Symmetric dimethylarginine; alternate mark. The residue at position 114 (serine 114) is a Phosphoserine. The segment at 114–122 (SWGAEGQKP) is induces experimental autoimmune encephalomyelitis (EAE) 2. An N6-acetyllysine modification is found at lysine 121. At arginine 129 the chain carries Citrulline. The segment at 136–167 (GFKGAHDAQGTLSKIFKLGGRDSRSGSPMARR) is disordered. Deamidated glutamine is present on glutamine 144. Arginine 156 carries the citrulline modification. Serine 158 is subject to Phosphoserine. Serine 162 carries the phosphoserine; by UHMK1 modification. Arginine 167 bears the Citrulline mark.

It belongs to the myelin basic protein family. In terms of assembly, homodimer. In terms of processing, at least 5 charge isomers; C1 (the most cationic, least modified, and most abundant form), C2, C3, C4 and C5 (the least cationic form); are produced as a result of optional post-translational modifications such as phosphorylation of serine or threonine residues, deamidation of glutamine or asparagine residues, citrullination and methylation of arginine residues. C1 and C2 are unphosphorylated, C3 and C4 are monophosphorylated and C5 is phosphorylated at two positions. Post-translationally, phosphorylated by TAOK2, VRK2, MAPK11, MAPK12, MAPK14 and MINK1. Proteolytically cleaved in B cell lysosomes by cathepsin CTSG which degrades the major immunogenic MBP epitope and prevents the activation of MBP-specific autoreactive T cells. In terms of tissue distribution, found in both the central and the peripheral nervous system.

Its subcellular location is the myelin membrane. Is, with PLP, the most abundant protein component of the myelin membrane in the CNS. Has a role in both the formation and stabilization of this compact multilayer arrangement of bilayers. Each splice variant and charge isomer may have a specialized function in the assembly of an optimized, biochemically functional myelin membrane. The sequence is that of Myelin basic protein (MBP) from Cavia porcellus (Guinea pig).